An 86-amino-acid polypeptide reads, in one-letter code: Triosephosphate isomerase (86 aa).

Glu-62 (proton acceptor) is an active-site residue.

The protein belongs to the triosephosphate isomerase family. In terms of assembly, homodimer.

It catalyses the reaction D-glyceraldehyde 3-phosphate = dihydroxyacetone phosphate. It participates in carbohydrate biosynthesis; gluconeogenesis. The protein operates within carbohydrate degradation; glycolysis; D-glyceraldehyde 3-phosphate from glycerone phosphate: step 1/1. The protein is Triosephosphate isomerase of Platanus orientalis (Oriental plane-tree).